A 387-amino-acid chain; its full sequence is Chorismate synthase (387 aa).

NADP(+) is bound by residues Arg40 and Arg46. FMN is bound by residues 129 to 131 (RSS), 250 to 251 (QA), Gly295, 310 to 314 (KPIPT), and Arg336.

The protein belongs to the chorismate synthase family. Homotetramer. Requires FMNH2 as cofactor.

The enzyme catalyses 5-O-(1-carboxyvinyl)-3-phosphoshikimate = chorismate + phosphate. It functions in the pathway metabolic intermediate biosynthesis; chorismate biosynthesis; chorismate from D-erythrose 4-phosphate and phosphoenolpyruvate: step 7/7. Its function is as follows. Catalyzes the anti-1,4-elimination of the C-3 phosphate and the C-6 proR hydrogen from 5-enolpyruvylshikimate-3-phosphate (EPSP) to yield chorismate, which is the branch point compound that serves as the starting substrate for the three terminal pathways of aromatic amino acid biosynthesis. This reaction introduces a second double bond into the aromatic ring system. The chain is Chorismate synthase from Desulforamulus reducens (strain ATCC BAA-1160 / DSM 100696 / MI-1) (Desulfotomaculum reducens).